Here is a 495-residue protein sequence, read N- to C-terminus: ATP synthase subunit beta, chloroplastic (495 aa).

An ATP-binding site is contributed by 172-179 (GGAGVGKT).

Belongs to the ATPase alpha/beta chains family. F-type ATPases have 2 components, CF(1) - the catalytic core - and CF(0) - the membrane proton channel. CF(1) has five subunits: alpha(3), beta(3), gamma(1), delta(1), epsilon(1). CF(0) has four main subunits: a(1), b(1), b'(1) and c(9-12).

It localises to the plastid. The protein resides in the chloroplast thylakoid membrane. It carries out the reaction ATP + H2O + 4 H(+)(in) = ADP + phosphate + 5 H(+)(out). In terms of biological role, produces ATP from ADP in the presence of a proton gradient across the membrane. The catalytic sites are hosted primarily by the beta subunits. This chain is ATP synthase subunit beta, chloroplastic, found in Eucomis bicolor (King's flower).